Reading from the N-terminus, the 81-residue chain is Salivary thrombin inhibitor anophelin (81 aa).

The N-terminal stretch at 1 to 22 is a signal peptide; sequence MANKLFLISLLCVVLVAKIAQA. N-linked (GlcNAc...) asparagine glycosylation is present at Asn-45. Residues 70–73 form a blocks active site cleft of host thrombin in a reverse direction compared to substrates region; that stretch reads DPGR.

This sequence belongs to the anophelin family. Interacts with human F2 (thrombin); the interaction results in thrombin inhibition.

The protein resides in the secreted. Salivary protein with anticoagulant activity that inhibits host thrombin (F2). This is Salivary thrombin inhibitor anophelin from Anopheles darlingi (Mosquito).